Reading from the N-terminus, the 291-residue chain is Segregation and condensation protein B (291 aa).

This sequence belongs to the ScpB family. As to quaternary structure, homodimer. Homodimerization may be required to stabilize the binding of ScpA to the Smc head domains. Component of a cohesin-like complex composed of ScpA, ScpB and the Smc homodimer, in which ScpA and ScpB bind to the head domain of Smc. The presence of the three proteins is required for the association of the complex with DNA.

It is found in the cytoplasm. Participates in chromosomal partition during cell division. May act via the formation of a condensin-like complex containing Smc and ScpA that pull DNA away from mid-cell into both cell halves. In Mycoplasmoides gallisepticum (strain R(low / passage 15 / clone 2)) (Mycoplasma gallisepticum), this protein is Segregation and condensation protein B.